Here is a 66-residue protein sequence, read N- to C-terminus: Large ribosomal subunit protein bL35 (66 aa).

This sequence belongs to the bacterial ribosomal protein bL35 family.

This is Large ribosomal subunit protein bL35 from Thermomicrobium roseum (strain ATCC 27502 / DSM 5159 / P-2).